The chain runs to 456 residues: tRNA-2-methylthio-N(6)-dimethylallyladenosine synthase (456 aa).

One can recognise an MTTase N-terminal domain in the interval 6–123 (KHVYIETYGC…LPNLIEEAQR (118 aa)). Positions 15, 52, 86, 160, 164, and 167 each coordinate [4Fe-4S] cluster. The Radical SAM core domain maps to 146-380 (RAEGPTAYVS…RILEMAASIS (235 aa)). Residues 381–444 (EAMVGTEQWV…KNSLRGRLIE (64 aa)) enclose the TRAM domain.

The protein belongs to the methylthiotransferase family. MiaB subfamily. In terms of assembly, monomer. It depends on [4Fe-4S] cluster as a cofactor.

Its subcellular location is the cytoplasm. It catalyses the reaction N(6)-dimethylallyladenosine(37) in tRNA + (sulfur carrier)-SH + AH2 + 2 S-adenosyl-L-methionine = 2-methylsulfanyl-N(6)-dimethylallyladenosine(37) in tRNA + (sulfur carrier)-H + 5'-deoxyadenosine + L-methionine + A + S-adenosyl-L-homocysteine + 2 H(+). Catalyzes the methylthiolation of N6-(dimethylallyl)adenosine (i(6)A), leading to the formation of 2-methylthio-N6-(dimethylallyl)adenosine (ms(2)i(6)A) at position 37 in tRNAs that read codons beginning with uridine. The polypeptide is tRNA-2-methylthio-N(6)-dimethylallyladenosine synthase (Dichelobacter nodosus (strain VCS1703A)).